We begin with the raw amino-acid sequence, 309 residues long: Probable cell division protein kinase ECU11_1290 (309 aa).

One can recognise a Protein kinase domain in the interval 4 to 288 (YENIKQVGEG…VISSHKNTYI (285 aa)). ATP is bound by residues 10–18 (VGEGAFGQV) and Lys33. The Proton acceptor role is filled by Asp124.

Belongs to the protein kinase superfamily. CMGC Ser/Thr protein kinase family. CDC2/CDKX subfamily.

It localises to the nucleus. The enzyme catalyses L-seryl-[protein] + ATP = O-phospho-L-seryl-[protein] + ADP + H(+). It carries out the reaction L-threonyl-[protein] + ATP = O-phospho-L-threonyl-[protein] + ADP + H(+). Functionally, may play a role in the control of the eukaryotic cell cycle. The polypeptide is Probable cell division protein kinase ECU11_1290 (Encephalitozoon cuniculi (strain GB-M1) (Microsporidian parasite)).